The chain runs to 231 residues: Large ribosomal subunit protein uL1 (231 aa).

The protein belongs to the universal ribosomal protein uL1 family. As to quaternary structure, part of the 50S ribosomal subunit.

In terms of biological role, binds directly to 23S rRNA. The L1 stalk is quite mobile in the ribosome, and is involved in E site tRNA release. Protein L1 is also a translational repressor protein, it controls the translation of the L11 operon by binding to its mRNA. This Caldanaerobacter subterraneus subsp. tengcongensis (strain DSM 15242 / JCM 11007 / NBRC 100824 / MB4) (Thermoanaerobacter tengcongensis) protein is Large ribosomal subunit protein uL1.